The following is a 244-amino-acid chain: Biosynthetic peptidoglycan transglycosylase (244 aa).

A helical membrane pass occupies residues 25 to 45; sequence LLLLLAIALLYQSWFLLHIIY.

This sequence belongs to the glycosyltransferase 51 family.

It localises to the cell inner membrane. The enzyme catalyses [GlcNAc-(1-&gt;4)-Mur2Ac(oyl-L-Ala-gamma-D-Glu-L-Lys-D-Ala-D-Ala)](n)-di-trans,octa-cis-undecaprenyl diphosphate + beta-D-GlcNAc-(1-&gt;4)-Mur2Ac(oyl-L-Ala-gamma-D-Glu-L-Lys-D-Ala-D-Ala)-di-trans,octa-cis-undecaprenyl diphosphate = [GlcNAc-(1-&gt;4)-Mur2Ac(oyl-L-Ala-gamma-D-Glu-L-Lys-D-Ala-D-Ala)](n+1)-di-trans,octa-cis-undecaprenyl diphosphate + di-trans,octa-cis-undecaprenyl diphosphate + H(+). The protein operates within cell wall biogenesis; peptidoglycan biosynthesis. Peptidoglycan polymerase that catalyzes glycan chain elongation from lipid-linked precursors. This chain is Biosynthetic peptidoglycan transglycosylase, found in Nitrosomonas eutropha (strain DSM 101675 / C91 / Nm57).